The primary structure comprises 290 residues: Large ribosomal subunit protein uL3 (290 aa).

Gln152 is subject to N5-methylglutamine. Residues 250–290 (ARLAEEQAAAEAESLAQAEAEIAAEGSDAAPEGDADKKDGE) are disordered. Low complexity predominate over residues 255-274 (EQAAAEAESLAQAEAEIAAE).

The protein belongs to the universal ribosomal protein uL3 family. As to quaternary structure, part of the 50S ribosomal subunit. Forms a cluster with proteins L14 and L19. Methylated by PrmB.

Functionally, one of the primary rRNA binding proteins, it binds directly near the 3'-end of the 23S rRNA, where it nucleates assembly of the 50S subunit. In Jannaschia sp. (strain CCS1), this protein is Large ribosomal subunit protein uL3.